Here is a 73-residue protein sequence, read N- to C-terminus: MSEKEAGIEVQGTVEEALAGGMYRVKVDQGPTVLAYASGKMKKFHIRIIPGDRVKLELSPYDLTRGRITYRDK.

Positions 1-73 (MSEKEAGIEV…TRGRITYRDK (73 aa)) constitute an S1-like domain.

This sequence belongs to the IF-1 family. Component of the 30S ribosomal translation pre-initiation complex which assembles on the 30S ribosome in the order IF-2 and IF-3, IF-1 and N-formylmethionyl-tRNA(fMet); mRNA recruitment can occur at any time during PIC assembly.

The protein localises to the cytoplasm. Its function is as follows. One of the essential components for the initiation of protein synthesis. Stabilizes the binding of IF-2 and IF-3 on the 30S subunit to which N-formylmethionyl-tRNA(fMet) subsequently binds. Helps modulate mRNA selection, yielding the 30S pre-initiation complex (PIC). Upon addition of the 50S ribosomal subunit IF-1, IF-2 and IF-3 are released leaving the mature 70S translation initiation complex. The polypeptide is Translation initiation factor IF-1 (Anaeromyxobacter sp. (strain Fw109-5)).